A 307-amino-acid polypeptide reads, in one-letter code: N-acetylneuraminate lyase (307 aa).

Positions 51 and 52 each coordinate aceneuramate. The active-site Proton donor is tyrosine 143. The active-site Schiff-base intermediate with substrate is lysine 173. 5 residues coordinate aceneuramate: serine 175, glycine 199, aspartate 201, glutamate 202, and serine 218.

Belongs to the DapA family. NanA subfamily. In terms of assembly, homotetramer.

Its subcellular location is the cytoplasm. It carries out the reaction aceneuramate = aldehydo-N-acetyl-D-mannosamine + pyruvate. It functions in the pathway amino-sugar metabolism; N-acetylneuraminate degradation. Catalyzes the cleavage of N-acetylneuraminic acid (sialic acid) to form pyruvate and N-acetylmannosamine via a Schiff base intermediate. It prevents sialic acids from being recycled and returning to the cell surface. Involved in the N-glycolylneuraminic acid (Neu5Gc) degradation pathway. In Danio rerio (Zebrafish), this protein is N-acetylneuraminate lyase.